Here is a 209-residue protein sequence, read N- to C-terminus: ATP-dependent Clp protease proteolytic subunit 2 (209 aa).

Residue Ser-106 is the Nucleophile of the active site. Residue His-131 is part of the active site.

It belongs to the peptidase S14 family. Fourteen ClpP subunits assemble into 2 heptameric rings which stack back to back to give a disk-like structure with a central cavity, resembling the structure of eukaryotic proteasomes.

The protein resides in the cytoplasm. The catalysed reaction is Hydrolysis of proteins to small peptides in the presence of ATP and magnesium. alpha-casein is the usual test substrate. In the absence of ATP, only oligopeptides shorter than five residues are hydrolyzed (such as succinyl-Leu-Tyr-|-NHMec, and Leu-Tyr-Leu-|-Tyr-Trp, in which cleavage of the -Tyr-|-Leu- and -Tyr-|-Trp bonds also occurs).. In terms of biological role, cleaves peptides in various proteins in a process that requires ATP hydrolysis. Has a chymotrypsin-like activity. Plays a major role in the degradation of misfolded proteins. The protein is ATP-dependent Clp protease proteolytic subunit 2 of Rhizobium etli (strain ATCC 51251 / DSM 11541 / JCM 21823 / NBRC 15573 / CFN 42).